The sequence spans 521 residues: Proactivator polypeptide-like 1 (521 aa).

A signal peptide spans 1–17 (MLCALLLLPSLLGATRA). A propeptide spanning residues 18–59 (SPTSGPQECAKGSTVWCQDLQTAARCGAVGYCQGAVWNKPTA) is cleaved from the precursor. One can recognise a Saposin A-type 1 domain in the interval 19-59 (PTSGPQECAKGSTVWCQDLQTAARCGAVGYCQGAVWNKPTA). Saposin B-type domains lie at 60–144 (KSLP…EPLQ) and 180–258 (EGAL…EELG). 3 disulfide bridges follow: C64–C140, C67–C134, and C95–C107. A propeptide spanning residues 146–180 (HLATLRPLSKEDTFEAVAPFMANGPLTFHPRQAPE) is cleaved from the precursor. 3 cysteine pairs are disulfide-bonded: C184–C254, C187–C248, and C213–C224. Residue N201 is glycosylated (N-linked (GlcNAc...) asparagine). Positions 259 to 288 (APARLTQVVAMDGVPSLELGLPRKQSEMQM) are excised as a propeptide. Saposin B-type domains lie at 290–370 (AGVT…GNRR) and 392–473 (QGSF…HGPR). Disulfide bonds link C294-C366, C297-C360, and C325-C336. N-linked (GlcNAc...) asparagine glycosylation occurs at N311. A propeptide spanning residues 370 to 391 (RRARAVHDAYAIVPSPEWDAEN) is cleaved from the precursor. 3 disulfide bridges follow: C396–C469, C399–C463, and C427–C438. Positions 474-521 (TPLLGTDQCALGPSFWCRSQEAAKLCNAVQHCQKHVWKEMHLHAGEHA) are excised as a propeptide. Residues 475 to 515 (PLLGTDQCALGPSFWCRSQEAAKLCNAVQHCQKHVWKEMHL) enclose the Saposin A-type 2 domain.

The protein localises to the secreted. May activate the lysosomal degradation of sphingolipids. In Homo sapiens (Human), this protein is Proactivator polypeptide-like 1 (PSAPL1).